Here is a 407-residue protein sequence, read N- to C-terminus: Putative glucose/galactose transporter (407 aa).

12 consecutive transmembrane segments (helical) span residues 11–31, 47–67, 70–90, 96–116, 139–159, 180–200, 225–245, 263–283, 300–320, 321–341, 349–369, and 378–398; these read GSLT…DILI, LIQF…GNVI, IGYP…CALF, FGSY…IVCL, VQAF…LLIF, VQMP…VMYL, FVFG…IGSF, HYLV…SALM, IILI…ALTF, VGFF…LNLG, GVIS…GVVT, and NLLY…FFAL.

This sequence belongs to the major facilitator superfamily. FHS transporter (TC 2.A.1.7) family.

It is found in the cell inner membrane. Its function is as follows. Intake of glucose and galactose. This is Putative glucose/galactose transporter (gluP) from Helicobacter pylori (strain J99 / ATCC 700824) (Campylobacter pylori J99).